The sequence spans 408 residues: Zinc finger protein 764 (408 aa).

Residues 26–97 (VSFADVAVYF…AAQDPEVAKC (72 aa)) enclose the KRAB domain. Positions 91-167 (DPEVAKCQTQ…GRPSLCAHPP (77 aa)) are disordered. 7 consecutive C2H2-type zinc fingers follow at residues 175 to 197 (HGCYVCGKSFAWRSTLVEHVYSH), 203 to 225 (FHCTDCGKGFGHASSLSKHRAIH), 231 to 253 (HRCLECGRAFTQRSALTSHLRVH), 259 to 281 (YGCADCGRRFSQSSALYQHRRVH), 287 to 309 (FPCPDCGRAFAYPSDLRRHVRTH), 315 to 337 (YPCPDCGRCFRQSSEMAAHRRTH), and 343 to 365 (YPCPQCGRRFGQKSAVAKHQWVH).

Belongs to the krueppel C2H2-type zinc-finger protein family. Interacts (via KRAB domain) with NR3C1/GR (via NR LBD domain); the interaction regulates transcription factor activity of NR3C1 by directing its actions toward certain biologic pathways.

The protein resides in the nucleus. Functionally, zinc finger protein that functions as a cofactor for steroid hormone receptors, such as NR3C1/GR. Directs NR3C1/GR transcriptional activity toward specific biologic pathways by changing NR3C1/GR binding and transcriptional activity on the glucocorticoid-responsive genes. In Homo sapiens (Human), this protein is Zinc finger protein 764.